A 206-amino-acid chain; its full sequence is Endoplasmic reticulum transmembrane protein YET-like (206 aa).

At 1–2 the chain is on the lumenal side; sequence ME. The chain crosses the membrane as a helical span at residues 3 to 23; sequence FLMTLVFLVLLVEIVFCTFFM. The Cytoplasmic segment spans residues 24 to 46; the sequence is LPVSMHLRKNVYNKLDKLFGGQN. The chain crosses the membrane as a helical span at residues 47–67; the sequence is AKIFLKVLALLVIIVFCDSIV. Topologically, residues 68-101 are lumenal; it reads NSYNINKKLHTPELTGAKFDRQNEYTRMFRYQRN. The helical transmembrane segment at 102–122 threads the bilayer; that stretch reads SYICGFCLYLFFLIYRSQGII. Residues 123–206 are Cytoplasmic-facing; it reads SQLSNVEASK…KKPKTQKKDD (84 aa). Residues 140–198 adopt a coiled-coil conformation; sequence KNNLNTVETLLSENEKLKTEIKDLKKMEKEHKAMKSQAENTTKEYLKLQEEYNQLLGKK. The Di-lysine motif signature appears at 203 to 206; it reads KKDD.

The protein belongs to the BCAP29/BCAP31 family.

It localises to the endoplasmic reticulum membrane. In terms of biological role, may play a role in anterograde transport of membrane proteins from the endoplasmic reticulum to the Golgi. This chain is Endoplasmic reticulum transmembrane protein YET-like, found in Dictyostelium discoideum (Social amoeba).